The primary structure comprises 381 residues: Teichoic acid glycerol-phosphate primase (381 aa).

This sequence belongs to the CDP-glycerol glycerophosphotransferase family.

The protein resides in the cell membrane. It catalyses the reaction N-acetyl-beta-D-mannosaminyl-(1-&gt;4)-N-acetyl-alpha-D-glucosaminyl di-trans,octa-cis-undecaprenyl diphosphate + CDP-glycerol = 4-O-[(2R)-glycerylphospho]-N-acetyl-beta-D-mannosaminyl-(1-&gt;4)-N-acetyl-alpha-D-glucosaminyl di-trans,octa-cis-undecaprenyl diphosphate + CMP + H(+). It participates in cell wall biogenesis; poly(glycerol phosphate) teichoic acid biosynthesis. Functionally, catalyzes the addition of a single glycerol phosphate residue to the prenoldiphosphate-linked disaccharide, as a primer for polymerisation by TagF. The sequence is that of Teichoic acid glycerol-phosphate primase (tagB) from Bacillus subtilis (strain 168).